A 369-amino-acid polypeptide reads, in one-letter code: Adenosine 3'-phospho 5'-phosphosulfate transporter 2 (369 aa).

N-linked (GlcNAc...) asparagine glycosylation occurs at Asn-39. 6 helical membrane passes run 46 to 66 (LTQF…YGYL), 79 to 99 (YGWY…LIEL), 115 to 135 (MLIA…LGYL), 138 to 158 (PTQV…GVFI), 168 to 188 (VSAA…DSTI), and 191 to 211 (NFNL…AVIG). Asn-222 carries an N-linked (GlcNAc...) asparagine glycan. A run of 4 helical transmembrane segments spans residues 235 to 255 (IGFV…PAVA), 266 to 285 (GYAF…VLAL), 292 to 314 (LLAV…LFFA), and 317 to 337 (FTFQ…LNVY).

Belongs to the nucleotide-sugar transporter family. SLC35B subfamily.

Its subcellular location is the golgi apparatus membrane. The enzyme catalyses 3'-phosphoadenylyl sulfate(in) + adenosine 3',5'-bisphosphate(out) = 3'-phosphoadenylyl sulfate(out) + adenosine 3',5'-bisphosphate(in). Probably functions as a 3'-phosphoadenylyl sulfate:adenosine 3',5'-bisphosphate antiporter at the Golgi membranes. Mediates the transport from the cytosol into the lumen of the Golgi of 3'-phosphoadenylyl sulfate/adenosine 3'-phospho 5'-phosphosulfate (PAPS), a universal sulfuryl donor for sulfation events that take place in that compartment. The polypeptide is Adenosine 3'-phospho 5'-phosphosulfate transporter 2 (Mus musculus (Mouse)).